Reading from the N-terminus, the 146-residue chain is Large-conductance mechanosensitive channel (146 aa).

2 consecutive transmembrane segments (helical) span residues 12–32 (AFAM…GGAF) and 88–108 (LQAT…IKLI).

It belongs to the MscL family. As to quaternary structure, homopentamer.

The protein resides in the cell inner membrane. In terms of biological role, channel that opens in response to stretch forces in the membrane lipid bilayer. May participate in the regulation of osmotic pressure changes within the cell. In Bacteroides fragilis (strain ATCC 25285 / DSM 2151 / CCUG 4856 / JCM 11019 / LMG 10263 / NCTC 9343 / Onslow / VPI 2553 / EN-2), this protein is Large-conductance mechanosensitive channel.